The following is a 130-amino-acid chain: Small ribosomal subunit protein uS9 (130 aa).

A disordered region spans residues 106–130; the sequence is RDSRKVERKKPGLKKARKASQFSKR. Basic residues predominate over residues 111–130; sequence VERKKPGLKKARKASQFSKR.

The protein belongs to the universal ribosomal protein uS9 family.

The sequence is that of Small ribosomal subunit protein uS9 from Streptococcus pneumoniae (strain ATCC 700669 / Spain 23F-1).